The following is a 157-amino-acid chain: Crossover junction endodeoxyribonuclease RuvC (157 aa).

Active-site residues include D7, E66, and D139. 3 residues coordinate Mg(2+): D7, E66, and D139.

It belongs to the RuvC family. As to quaternary structure, homodimer which binds Holliday junction (HJ) DNA. The HJ becomes 2-fold symmetrical on binding to RuvC with unstacked arms; it has a different conformation from HJ DNA in complex with RuvA. In the full resolvosome a probable DNA-RuvA(4)-RuvB(12)-RuvC(2) complex forms which resolves the HJ. It depends on Mg(2+) as a cofactor.

The protein resides in the cytoplasm. It carries out the reaction Endonucleolytic cleavage at a junction such as a reciprocal single-stranded crossover between two homologous DNA duplexes (Holliday junction).. The RuvA-RuvB-RuvC complex processes Holliday junction (HJ) DNA during genetic recombination and DNA repair. Endonuclease that resolves HJ intermediates. Cleaves cruciform DNA by making single-stranded nicks across the HJ at symmetrical positions within the homologous arms, yielding a 5'-phosphate and a 3'-hydroxyl group; requires a central core of homology in the junction. The consensus cleavage sequence is 5'-(A/T)TT(C/G)-3'. Cleavage occurs on the 3'-side of the TT dinucleotide at the point of strand exchange. HJ branch migration catalyzed by RuvA-RuvB allows RuvC to scan DNA until it finds its consensus sequence, where it cleaves and resolves the cruciform DNA. The protein is Crossover junction endodeoxyribonuclease RuvC of Helicobacter pylori (strain Shi470).